The following is a 114-amino-acid chain: T cell receptor beta variable 19 (114 aa).

A signal peptide spans 1–21 (MSNQVLCCVVLCLLGANTVDG). Residues 22-114 (GITQSPKYLF…TAFYLCASSI (93 aa)) form the Ig-like domain. An N-linked (GlcNAc...) asparagine glycan is attached at asparagine 37. Cysteines 42 and 110 form a disulfide.

As to quaternary structure, alpha-beta TR is a heterodimer composed of an alpha and beta chain; disulfide-linked. The alpha-beta TR is associated with the transmembrane signaling CD3 coreceptor proteins to form the TR-CD3 (TcR or TCR). The assembly of alpha-beta TR heterodimers with CD3 occurs in the endoplasmic reticulum where a single alpha-beta TR heterodimer associates with one CD3D-CD3E heterodimer, one CD3G-CD3E heterodimer and one CD247 homodimer forming a stable octameric structure. CD3D-CD3E and CD3G-CD3E heterodimers preferentially associate with TR alpha and TR beta chains, respectively. The association of the CD247 homodimer is the last step of TcR assembly in the endoplasmic reticulum and is required for transport to the cell surface. (Microbial infection) Interacts with Staphylococcus aureus enterotoxin type B/SEB.

The protein resides in the cell membrane. In terms of biological role, v region of the variable domain of T cell receptor (TR) beta chain that participates in the antigen recognition. Alpha-beta T cell receptors are antigen specific receptors which are essential to the immune response and are present on the cell surface of T lymphocytes. Recognize peptide-major histocompatibility (MH) (pMH) complexes that are displayed by antigen presenting cells (APC), a prerequisite for efficient T cell adaptive immunity against pathogens. Binding of alpha-beta TR to pMH complex initiates TR-CD3 clustering on the cell surface and intracellular activation of LCK that phosphorylates the ITAM motifs of CD3G, CD3D, CD3E and CD247 enabling the recruitment of ZAP70. In turn ZAP70 phosphorylates LAT, which recruits numerous signaling molecules to form the LAT signalosome. The LAT signalosome propagates signal branching to three major signaling pathways, the calcium, the mitogen-activated protein kinase (MAPK) kinase and the nuclear factor NF-kappa-B (NF-kB) pathways, leading to the mobilization of transcription factors that are critical for gene expression and essential for T cell growth and differentiation. The T cell repertoire is generated in the thymus, by V-(D)-J rearrangement. This repertoire is then shaped by intrathymic selection events to generate a peripheral T cell pool of self-MH restricted, non-autoaggressive T cells. Post-thymic interaction of alpha-beta TR with the pMH complexes shapes TR structural and functional avidity. The chain is T cell receptor beta variable 19 from Homo sapiens (Human).